The chain runs to 167 residues: Regulator of sigma D (167 aa).

The protein belongs to the Rsd/AlgQ family. As to quaternary structure, interacts with RpoD.

It is found in the cytoplasm. Functionally, binds RpoD and negatively regulates RpoD-mediated transcription activation by preventing the interaction between the primary sigma factor RpoD with the catalytic core of the RNA polymerase and with promoter DNA. May be involved in replacement of the RNA polymerase sigma subunit from RpoD to RpoS during the transition from exponential growth to the stationary phase. The sequence is that of Regulator of sigma D from Yersinia enterocolitica serotype O:8 / biotype 1B (strain NCTC 13174 / 8081).